We begin with the raw amino-acid sequence, 92 residues long: Small ribosomal subunit protein uS19c (92 aa).

The protein belongs to the universal ribosomal protein uS19 family.

The protein localises to the plastid. It is found in the chloroplast. Functionally, protein S19 forms a complex with S13 that binds strongly to the 16S ribosomal RNA. The sequence is that of Small ribosomal subunit protein uS19c from Staurastrum punctulatum (Green alga).